Consider the following 345-residue polypeptide: tRNA pseudouridine synthase B (345 aa).

The tract at residues 1-33 (MGGNSQPHQEPRRVNNDPRAKQQKGNQVRRDRR) is disordered. The segment covering 9 to 20 (QEPRRVNNDPRA) has biased composition (basic and acidic residues). Catalysis depends on aspartate 72, which acts as the Nucleophile.

Belongs to the pseudouridine synthase TruB family. Type 1 subfamily.

It carries out the reaction uridine(55) in tRNA = pseudouridine(55) in tRNA. Responsible for synthesis of pseudouridine from uracil-55 in the psi GC loop of transfer RNAs. In Bradyrhizobium diazoefficiens (strain JCM 10833 / BCRC 13528 / IAM 13628 / NBRC 14792 / USDA 110), this protein is tRNA pseudouridine synthase B.